The following is an 88-amino-acid chain: MANTAQARKRARQNTKRRQNSASQRSMVRTYLKRVDAAIAAKDYDAATEAYKKAVPVLDRMADKGILHKNKAARRKSRLNKTIKGLLA.

The tract at residues 1 to 26 (MANTAQARKRARQNTKRRQNSASQRS) is disordered. The segment covering 7-19 (ARKRARQNTKRRQ) has biased composition (basic residues).

This sequence belongs to the bacterial ribosomal protein bS20 family.

In terms of biological role, binds directly to 16S ribosomal RNA. The protein is Small ribosomal subunit protein bS20 of Psychrobacter cryohalolentis (strain ATCC BAA-1226 / DSM 17306 / VKM B-2378 / K5).